The chain runs to 154 residues: Protein X (154 aa).

The mitochondrial targeting sequence stretch occupies residues Pro68–Phe117.

Belongs to the orthohepadnavirus protein X family. May form homodimer. May interact with host CEBPA, CFLAR, CREB1, DDB1, E4F1, HBXIP, HSPD1/HSP60, NFKBIA, POLR2E and SMAD4. Interacts with host SMC5-SMC6 complex and induces its degradation. Interacts with host TRPC4AP; leading to prevent ubiquitination of TRPC4AP. Interacts with host PLSCR1; this interaction promotes ubiquitination and degradation of HBx and impairs HBx-mediated cell proliferation. In terms of processing, a fraction may be phosphorylated in insect cells and HepG2 cells, a human hepatoblastoma cell line. Phosphorylated in vitro by host protein kinase C or mitogen-activated protein kinase. N-acetylated in insect cells.

Its subcellular location is the host cytoplasm. It is found in the host nucleus. The protein resides in the host mitochondrion. Functionally, multifunctional protein that plays a role in silencing host antiviral defenses and promoting viral transcription. Does not seem to be essential for HBV infection. May be directly involved in development of cirrhosis and liver cancer (hepatocellular carcinoma). Most of cytosolic activities involve modulation of cytosolic calcium. The effect on apoptosis is controversial depending on the cell types in which the studies have been conducted. May induce apoptosis by localizing in mitochondria and causing loss of mitochondrial membrane potential. May also modulate apoptosis by binding host CFLAR, a key regulator of the death-inducing signaling complex (DISC). Promotes viral transcription by using the host E3 ubiquitin ligase DDB1 to target the SMC5-SMC6 complex to proteasomal degradation. This host complex would otherwise bind to viral episomal DNA, and prevents its transcription. Moderately stimulates transcription of many different viral and cellular transcription elements. Promoters and enhancers stimulated by HBx contain DNA binding sites for NF-kappa-B, AP-1, AP-2, c-EBP, ATF/CREB, or the calcium-activated factor NF-AT. The protein is Protein X of Hepatitis B virus genotype B2 (isolate Vietnam/9873/1997) (HBV-B).